The primary structure comprises 71 residues: Translation initiation factor IF-1 (71 aa).

The region spanning 1-71 (MAKQSAIEQD…LSKARITYRY (71 aa)) is the S1-like domain.

The protein belongs to the IF-1 family. In terms of assembly, component of the 30S ribosomal translation pre-initiation complex which assembles on the 30S ribosome in the order IF-2 and IF-3, IF-1 and N-formylmethionyl-tRNA(fMet); mRNA recruitment can occur at any time during PIC assembly.

Its subcellular location is the cytoplasm. Functionally, one of the essential components for the initiation of protein synthesis. Stabilizes the binding of IF-2 and IF-3 on the 30S subunit to which N-formylmethionyl-tRNA(fMet) subsequently binds. Helps modulate mRNA selection, yielding the 30S pre-initiation complex (PIC). Upon addition of the 50S ribosomal subunit IF-1, IF-2 and IF-3 are released leaving the mature 70S translation initiation complex. The polypeptide is Translation initiation factor IF-1 (Flavobacterium johnsoniae (strain ATCC 17061 / DSM 2064 / JCM 8514 / BCRC 14874 / CCUG 350202 / NBRC 14942 / NCIMB 11054 / UW101) (Cytophaga johnsonae)).